A 484-amino-acid polypeptide reads, in one-letter code: Chromosomal replication initiator protein DnaA (484 aa).

Positions 1–74 are domain I, interacts with DnaA modulators; sequence MEKSKNIWSL…ILTKNGYNNV (74 aa). The interval 74–139 is domain II; the sequence is VTIVFTNQPP…EEEPTNFKNP (66 aa). Residues 140 to 356 are domain III, AAA+ region; sequence FLKKRYTFEN…AAVTKLKAYI (217 aa). ATP contacts are provided by glycine 184, glycine 186, lysine 187, and threonine 188. The segment at 357–484 is domain IV, binds dsDNA; that stretch reads DLDNIEIDID…TELMNKIKKN (128 aa).

Belongs to the DnaA family. In terms of assembly, oligomerizes as a right-handed, spiral filament on DNA at oriC.

The protein resides in the cytoplasm. Plays an essential role in the initiation and regulation of chromosomal replication. ATP-DnaA binds to the origin of replication (oriC) to initiate formation of the DNA replication initiation complex once per cell cycle. Binds the DnaA box (a 9 base pair repeat at the origin) and separates the double-stranded (ds)DNA. Forms a right-handed helical filament on oriC DNA; dsDNA binds to the exterior of the filament while single-stranded (ss)DNA is stabiized in the filament's interior. The ATP-DnaA-oriC complex binds and stabilizes one strand of the AT-rich DNA unwinding element (DUE), permitting loading of DNA polymerase. After initiation quickly degrades to an ADP-DnaA complex that is not apt for DNA replication. Binds acidic phospholipids. This is Chromosomal replication initiator protein DnaA from Borrelia garinii subsp. bavariensis (strain ATCC BAA-2496 / DSM 23469 / PBi) (Borreliella bavariensis).